The chain runs to 56 residues: uncharacterized protein (56 aa).

2 helical membrane-spanning segments follow: residues V5–Y23 and I33–W55.

The protein resides in the cell membrane. This is an uncharacterized protein from Archaeoglobus fulgidus (strain ATCC 49558 / DSM 4304 / JCM 9628 / NBRC 100126 / VC-16).